We begin with the raw amino-acid sequence, 180 residues long: Nucleoid-associated protein At4g30620, chloroplastic (180 aa).

Residues 1 to 48 (MASTATNTDFFKTLLSPFSNGNAAQRSSRQNIVWLNRKQSGNNNRSLR) constitute a chloroplast transit peptide. Positions 45 to 65 (RSLRVNGLFGGGKKDNKEDGQ) are disordered. Over residues 56 to 65 (GKKDNKEDGQ) the composition is skewed to basic and acidic residues.

This sequence belongs to the YbaB/EbfC family. In terms of assembly, homodimer. Binds to the translation initiation factors TIF3E1.

It is found in the plastid. The protein localises to the chloroplast. Its function is as follows. Binds to DNA and alters its conformation. May be involved in regulation of gene expression, nucleoid organization and DNA protection. The protein is Nucleoid-associated protein At4g30620, chloroplastic of Arabidopsis thaliana (Mouse-ear cress).